A 227-amino-acid chain; its full sequence is Chloronitrobenzene nitroreductase (227 aa).

An FMN-binding site is contributed by 14 to 18 (RRTKR). Ser-44 contributes to the NADP(+) binding site. FMN is bound by residues 172 to 173 (GL) and Arg-215.

It belongs to the nitroreductase family. FMN serves as cofactor.

The catalysed reaction is N-phenylhydroxylamine + 2 NADP(+) + H2O = nitrobenzene + 2 NADPH + 2 H(+). The protein operates within xenobiotic degradation; nitrobenzene degradation. It participates in xenobiotic degradation; 4-chloronitrobenzene degradation. Involved in the biodegradation of chlorinated nitroaromatic compounds. Catalyzes the reduction of 4-chloronitrobenzene to yield 1-hydroxylamino-4-chlorobenzene. Probably also able to catalyze the two-electron reduction of nitrobenzene (NB) to produce a nitrosobenzene (NOB) intermediate, which is immediately reduced to hydroxylaminobenzene (HAB) by a second two-electron transfer. The sequence is that of Chloronitrobenzene nitroreductase from Comamonas testosteroni (Pseudomonas testosteroni).